The sequence spans 135 residues: RxLR effector protein PITG_02860 (135 aa).

Residues 1-18 form the signal peptide; it reads MRLAFLLLAVSHFICGNA. The short motif at 48-64 is the RxLR-dEER element; it reads RKLLRTDERLSEANEER. Residues 126–135 are NRL1-binding domain; that stretch reads LKDPQAFRGP.

This sequence belongs to the RxLR effector family. As to quaternary structure, interacts with host ubiquitin E3 ligase NRL1.

It localises to the secreted. The protein resides in the host cytoplasm. It is found in the host nucleus. The protein localises to the host nucleoplasm. Effector that promotes P.infestans virulence and suppresses pattern-triggered immunity (PTI). Interacts with the host ubiquitin E3 ligase NRL1 and enhances the association between NRL1 and SWAP70 to promote proteasome-mediated degradation of SWAP70, which results in the suppression of immunity. This is RxLR effector protein PITG_02860 from Phytophthora infestans (strain T30-4) (Potato late blight agent).